The following is a 139-amino-acid chain: Holo-[acyl-carrier-protein] synthase (139 aa).

Residues D8 and E61 each coordinate Mg(2+).

The protein belongs to the P-Pant transferase superfamily. AcpS family. The cofactor is Mg(2+).

Its subcellular location is the cytoplasm. The enzyme catalyses apo-[ACP] + CoA = holo-[ACP] + adenosine 3',5'-bisphosphate + H(+). Its function is as follows. Transfers the 4'-phosphopantetheine moiety from coenzyme A to a Ser of acyl-carrier-protein. The polypeptide is Holo-[acyl-carrier-protein] synthase (Nitrobacter hamburgensis (strain DSM 10229 / NCIMB 13809 / X14)).